The primary structure comprises 234 residues: MNMFASGTAALPLRASGVVVAPTVLAGGALSRVDQLKAQIRNPGEASFFYRDHHFQYDAVKVLPGEYFVSAEDLVIMTVLGSCISACIWDGRVRAGGMNHFMLPDGDSVDGFGRYGSYAMELLINELLKKGARRESMQAKVFGGAAVMAGFTTMNVGERNTKFVLDYLATERIPVVSQDVLDIHPRKVCFFPVTGKVLVKRLAHSHPETLAVEERKGNAATVAKATSGGSVDLF.

This sequence belongs to the CheD family.

It carries out the reaction L-glutaminyl-[protein] + H2O = L-glutamyl-[protein] + NH4(+). Functionally, probably deamidates glutamine residues to glutamate on methyl-accepting chemotaxis receptors (MCPs), playing an important role in chemotaxis. This Albidiferax ferrireducens (strain ATCC BAA-621 / DSM 15236 / T118) (Rhodoferax ferrireducens) protein is Probable chemoreceptor glutamine deamidase CheD 1.